The primary structure comprises 82 residues: Myosin light chain alkali (82 aa).

Positions 7-42 constitute an EF-hand domain; it reads GCYGDFIECLKLYDKEENGTMMLAELQHALLALGES.

In terms of assembly, myosin is a hexamer of 2 heavy chains and 4 light chains.

This chain is Myosin light chain alkali (Mlc1), found in Drosophila sechellia (Fruit fly).